The following is a 141-amino-acid chain: Large ribosomal subunit protein uL11 (141 aa).

The protein belongs to the universal ribosomal protein uL11 family. Part of the ribosomal stalk of the 50S ribosomal subunit. Interacts with L10 and the large rRNA to form the base of the stalk. L10 forms an elongated spine to which L12 dimers bind in a sequential fashion forming a multimeric L10(L12)X complex. One or more lysine residues are methylated.

Forms part of the ribosomal stalk which helps the ribosome interact with GTP-bound translation factors. In Amoebophilus asiaticus (strain 5a2), this protein is Large ribosomal subunit protein uL11.